Here is a 382-residue protein sequence, read N- to C-terminus: UDP-N-acetylglucosamine--N-acetylmuramyl-(pentapeptide) pyrophosphoryl-undecaprenol N-acetylglucosamine transferase (382 aa).

UDP-N-acetyl-alpha-D-glucosamine-binding positions include 11–13 (TGG), asparagine 124, arginine 165, serine 200, isoleucine 254, and glutamine 299.

This sequence belongs to the glycosyltransferase 28 family. MurG subfamily.

The protein resides in the cell inner membrane. The catalysed reaction is di-trans,octa-cis-undecaprenyl diphospho-N-acetyl-alpha-D-muramoyl-L-alanyl-D-glutamyl-meso-2,6-diaminopimeloyl-D-alanyl-D-alanine + UDP-N-acetyl-alpha-D-glucosamine = di-trans,octa-cis-undecaprenyl diphospho-[N-acetyl-alpha-D-glucosaminyl-(1-&gt;4)]-N-acetyl-alpha-D-muramoyl-L-alanyl-D-glutamyl-meso-2,6-diaminopimeloyl-D-alanyl-D-alanine + UDP + H(+). It functions in the pathway cell wall biogenesis; peptidoglycan biosynthesis. In terms of biological role, cell wall formation. Catalyzes the transfer of a GlcNAc subunit on undecaprenyl-pyrophosphoryl-MurNAc-pentapeptide (lipid intermediate I) to form undecaprenyl-pyrophosphoryl-MurNAc-(pentapeptide)GlcNAc (lipid intermediate II). This is UDP-N-acetylglucosamine--N-acetylmuramyl-(pentapeptide) pyrophosphoryl-undecaprenol N-acetylglucosamine transferase from Nitratidesulfovibrio vulgaris (strain DSM 19637 / Miyazaki F) (Desulfovibrio vulgaris).